A 314-amino-acid chain; its full sequence is Hydroxyacyl-coenzyme A dehydrogenase, mitochondrial (314 aa).

Residues 1-12 (MAFVTRQFVRSM) constitute a mitochondrion transit peptide. NAD(+) contacts are provided by residues 34-39 (GGGLMG) and Asp57. Ser73 serves as a coordination point for CoA. Lys75 carries the post-translational modification N6-acetyllysine. A CoA-binding site is contributed by Lys80. At Lys80 the chain carries N6-succinyllysine. Residues Lys81 and Lys87 each carry the N6-acetyllysine; alternate modification. Lys81 and Lys87 each carry N6-succinyllysine; alternate. Position 122 (Glu122) interacts with NAD(+). The residue at position 125 (Lys125) is an N6-acetyllysine. Lys127 is a binding site for NAD(+). The residue at position 127 (Lys127) is an N6-(2-hydroxyisobutyryl)lysine. The residue at position 136 (Lys136) is an N6-acetyllysine; alternate. Position 136 is an N6-succinyllysine; alternate (Lys136). NAD(+) contacts are provided by Ser149 and Asn173. Ser149 lines the CoA pocket. An N6-acetyllysine modification is found at Lys179. N6-acetyllysine; alternate is present on residues Lys185, Lys192, and Lys202. Residues Lys185, Lys192, and Lys202 each carry the N6-succinyllysine; alternate modification. Lys206 is subject to N6-succinyllysine. An N6-acetyllysine; alternate mark is found at Lys212 and Lys241. Residues Lys212 and Lys241 each carry the N6-succinyllysine; alternate modification. Residue Lys305 participates in NAD(+) binding. An N6-acetyllysine; alternate modification is found at Lys312. Lys312 is modified (N6-succinyllysine; alternate).

This sequence belongs to the 3-hydroxyacyl-CoA dehydrogenase family. As to quaternary structure, homodimer. Interacts with GLUD1; this interaction inhibits the activation of glutamate dehydrogenase 1 (GLUD1). Succinylation at Lys-81, adjacent to a coenzyme A binding site. Desuccinylated by SIRT5.

The protein resides in the mitochondrion matrix. It catalyses the reaction a (3S)-3-hydroxyacyl-CoA + NAD(+) = a 3-oxoacyl-CoA + NADH + H(+). The enzyme catalyses (3S)-3-hydroxybutanoyl-CoA + NAD(+) = acetoacetyl-CoA + NADH + H(+). The catalysed reaction is (3S)-hydroxydecanoyl-CoA + NAD(+) = 3-oxodecanoyl-CoA + NADH + H(+). It carries out the reaction (3S)-hydroxyhexadecanoyl-CoA + NAD(+) = 3-oxohexadecanoyl-CoA + NADH + H(+). It functions in the pathway lipid metabolism; fatty acid beta-oxidation. Mitochondrial fatty acid beta-oxidation enzyme that catalyzes the third step of the beta-oxidation cycle for medium and short-chain 3-hydroxy fatty acyl-CoAs (C4 to C10). Plays a role in the control of insulin secretion by inhibiting the activation of glutamate dehydrogenase 1 (GLUD1), an enzyme that has an important role in regulating amino acid-induced insulin secretion. Plays a role in the maintenance of normal spermatogenesis through the reduction of fatty acid accumulation in the testes. The protein is Hydroxyacyl-coenzyme A dehydrogenase, mitochondrial (Hadh) of Rattus norvegicus (Rat).